A 265-amino-acid chain; its full sequence is Ribosomal RNA small subunit methyltransferase A (265 aa).

The S-adenosyl-L-methionine site is built by histidine 11, leucine 13, glycine 38, glutamate 59, aspartate 83, and asparagine 100.

The protein belongs to the class I-like SAM-binding methyltransferase superfamily. rRNA adenine N(6)-methyltransferase family. RsmA subfamily.

Its subcellular location is the cytoplasm. It catalyses the reaction adenosine(1518)/adenosine(1519) in 16S rRNA + 4 S-adenosyl-L-methionine = N(6)-dimethyladenosine(1518)/N(6)-dimethyladenosine(1519) in 16S rRNA + 4 S-adenosyl-L-homocysteine + 4 H(+). In terms of biological role, specifically dimethylates two adjacent adenosines (A1518 and A1519) in the loop of a conserved hairpin near the 3'-end of 16S rRNA in the 30S particle. May play a critical role in biogenesis of 30S subunits. This chain is Ribosomal RNA small subunit methyltransferase A, found in Thermosynechococcus vestitus (strain NIES-2133 / IAM M-273 / BP-1).